Consider the following 158-residue polypeptide: NADH-quinone oxidoreductase subunit B (158 aa).

[4Fe-4S] cluster contacts are provided by Cys36, Cys37, Cys101, and Cys131.

This sequence belongs to the complex I 20 kDa subunit family. As to quaternary structure, NDH-1 is composed of 14 different subunits. Subunits NuoB, C, D, E, F, and G constitute the peripheral sector of the complex. [4Fe-4S] cluster serves as cofactor.

It localises to the cell inner membrane. The enzyme catalyses a quinone + NADH + 5 H(+)(in) = a quinol + NAD(+) + 4 H(+)(out). NDH-1 shuttles electrons from NADH, via FMN and iron-sulfur (Fe-S) centers, to quinones in the respiratory chain. The immediate electron acceptor for the enzyme in this species is believed to be ubiquinone. Couples the redox reaction to proton translocation (for every two electrons transferred, four hydrogen ions are translocated across the cytoplasmic membrane), and thus conserves the redox energy in a proton gradient. The protein is NADH-quinone oxidoreductase subunit B of Francisella tularensis subsp. tularensis (strain FSC 198).